The primary structure comprises 1357 residues: DNA-directed RNA polymerase subunit beta (1357 aa).

This sequence belongs to the RNA polymerase beta chain family. In terms of assembly, the RNAP catalytic core consists of 2 alpha, 1 beta, 1 beta' and 1 omega subunit. When a sigma factor is associated with the core the holoenzyme is formed, which can initiate transcription.

It carries out the reaction RNA(n) + a ribonucleoside 5'-triphosphate = RNA(n+1) + diphosphate. Its function is as follows. DNA-dependent RNA polymerase catalyzes the transcription of DNA into RNA using the four ribonucleoside triphosphates as substrates. The protein is DNA-directed RNA polymerase subunit beta of Acinetobacter baumannii (strain ATCC 17978 / DSM 105126 / CIP 53.77 / LMG 1025 / NCDC KC755 / 5377).